The primary structure comprises 220 residues: Ribosome assembly protein 3 (220 aa).

Residues 1–91 (MSAGDISAIN…VSDVELTDEE (91 aa)) form a disordered region. Positions 13–24 (SVKKNRRRKKRR) are enriched in basic residues. Residues 29–39 (SSSDSSSSDPS) show a composition bias toward low complexity. Positions 41 to 72 (ESEKEEIQNGAIEEHVGENGKSDHVFSKGNDE) are enriched in basic and acidic residues. The segment covering 73–91 (DKQEDIAIEVSDVELTDEE) has biased composition (acidic residues). The residue at position 83 (S83) is a Phosphoserine. A Phosphothreonine modification is found at T88. Position 99 is a phosphoserine (S99).

This sequence belongs to the RSA3 family. In terms of assembly, associates with nucleolar pre-ribosomal particles. Interacts with DBP6. Together with DBP6, NOP8, URB1 and URB2, forms an RNA-independent complex, which is required during early maturation of nascent 60S ribosomal subunits.

The protein localises to the nucleus. Its subcellular location is the nucleolus. In terms of biological role, required for efficient biogenesis of the 60S ribosomal subunit. This chain is Ribosome assembly protein 3 (RSA3), found in Saccharomyces cerevisiae (strain ATCC 204508 / S288c) (Baker's yeast).